The sequence spans 78 residues: Large ribosomal subunit protein bL28B (78 aa).

Belongs to the bacterial ribosomal protein bL28 family.

The sequence is that of Large ribosomal subunit protein bL28B (rpmB2) from Streptomyces coelicolor (strain ATCC BAA-471 / A3(2) / M145).